Consider the following 288-residue polypeptide: NAD kinase (288 aa).

The Proton acceptor role is filled by Asp70. Residues 70–71, 144–145, Arg155, Lys172, Asp174, 185–190, and Gln245 each bind NAD(+); these read DG, ND, and TGYSLS.

The protein belongs to the NAD kinase family. The cofactor is a divalent metal cation.

It is found in the cytoplasm. It catalyses the reaction NAD(+) + ATP = ADP + NADP(+) + H(+). In terms of biological role, involved in the regulation of the intracellular balance of NAD and NADP, and is a key enzyme in the biosynthesis of NADP. Catalyzes specifically the phosphorylation on 2'-hydroxyl of the adenosine moiety of NAD to yield NADP. The sequence is that of NAD kinase from Citrifermentans bemidjiense (strain ATCC BAA-1014 / DSM 16622 / JCM 12645 / Bem) (Geobacter bemidjiensis).